Here is a 71-residue protein sequence, read N- to C-terminus: Equinin B (71 aa).

Positions 1–11 (MAVIMVDQAEG) are cleaved as a signal peptide. Residues 46–71 (GDEPQQMALDDESDPLVILPNNYNDY) constitute a propeptide that is removed on maturation.

Contains 4 disulfide bonds.

It is found in the secreted. The protein resides in the target cell membrane. Antimicrobial peptide with inhibitory activity against both Gram-positive and Gram-negative bacteria (E.coli (MIC=0.25 ug/ml), M.lysodeikticus (MIC=0.25 ug/ml), and V.alginolyticus (MIC=0.25 ug/ml)). Does not show hemolytic activity. This chain is Equinin B, found in Actinia equina (Beadlet anemone).